The chain runs to 343 residues: Squamosa promoter-binding-like protein 11 (343 aa).

The disordered stretch occupies residues 1-48 (MECNPVSSTTSSSLLWDWDATASAEPPPPPGKRGGRDSSSASASAKRG). 2 stretches are compositionally biased toward low complexity: residues 7-19 (SSTTSSSLLWDWD) and 37-48 (DSSSASASAKRG). The SBP-type zinc-finger motif lies at 64–141 (APRCQVEGCG…SDHNARRRKP (78 aa)). Positions 67, 72, 89, 92, 108, 111, 115, and 127 each coordinate Zn(2+). Residues 124 to 140 (KRSCRRRLSDHNARRRK) carry the Bipartite nuclear localization signal motif.

Expressed in stems, leaf sheaths, and young panicles.

The protein localises to the nucleus. In terms of biological role, trans-acting factor that binds specifically to the consensus nucleotide sequence 5'-TNCGTACAA-3'. May be involved in panicle development. The chain is Squamosa promoter-binding-like protein 11 (SPL11) from Oryza sativa subsp. japonica (Rice).